The sequence spans 136 residues: Small ribosomal subunit protein uS9 (136 aa).

Residues 96–136 (LSPDNRKPLKTEGHLSRDPRAKERRKYGLKKARKAPQFSKR) form a disordered region. The segment covering 98–116 (PDNRKPLKTEGHLSRDPRA) has biased composition (basic and acidic residues). Over residues 117-136 (KERRKYGLKKARKAPQFSKR) the composition is skewed to basic residues.

It belongs to the universal ribosomal protein uS9 family.

This is Small ribosomal subunit protein uS9 from Prochlorococcus marinus (strain MIT 9515).